The primary structure comprises 360 residues: Ribosomal RNA large subunit methyltransferase M (360 aa).

S-adenosyl-L-methionine contacts are provided by residues Ser192, 225 to 228 (APGG), Asp244, Asp264, and Asp280. Lys309 acts as the Proton acceptor in catalysis.

This sequence belongs to the class I-like SAM-binding methyltransferase superfamily. RNA methyltransferase RlmE family. RlmM subfamily. As to quaternary structure, monomer.

Its subcellular location is the cytoplasm. It carries out the reaction cytidine(2498) in 23S rRNA + S-adenosyl-L-methionine = 2'-O-methylcytidine(2498) in 23S rRNA + S-adenosyl-L-homocysteine + H(+). Its function is as follows. Catalyzes the 2'-O-methylation at nucleotide C2498 in 23S rRNA. The polypeptide is Ribosomal RNA large subunit methyltransferase M (Alkalilimnicola ehrlichii (strain ATCC BAA-1101 / DSM 17681 / MLHE-1)).